We begin with the raw amino-acid sequence, 376 residues long: MVPGYHRPAAVKVNLGAIRRNLENEMKHLDPGQKMLAVVKANAYGHGAVEVAKVAEEVGAAGFCVAVLDEGLQLRHADIVKPILVLGVVSPKYAPIAAVNNISLTVPNFEWLKEAEKYLAKENLQLKIHLGIDSGMGRIGFNEDDEFIEANKFLENNDQFFVEGMFAHFASADSADESYFEHQLEKFNHMKSLLTVKPKWIHVSNTAASIFHKNIKSDLVRFGIGIYGLNPSSNPASADLNPDIKLEPALSFESELTHVKTIHKGDGVSYGSTFVADKDTIIGTVPVGYADGWIRKFQGFKVKVGDKYCPIVGRICMDQFMVELPEKMPVGTKVVIISNNPDDPNNIKAAADYVNTIHYEVACLLNDRLPRIYYEK.

The active-site Proton acceptor; specific for D-alanine is K40. K40 carries the post-translational modification N6-(pyridoxal phosphate)lysine. R138 is a binding site for substrate. The Proton acceptor; specific for L-alanine role is filled by Y270. M317 lines the substrate pocket.

The protein belongs to the alanine racemase family. Requires pyridoxal 5'-phosphate as cofactor.

The catalysed reaction is L-alanine = D-alanine. It participates in amino-acid biosynthesis; D-alanine biosynthesis; D-alanine from L-alanine: step 1/1. Its function is as follows. Catalyzes the interconversion of L-alanine and D-alanine. May also act on other amino acids. This chain is Alanine racemase (alr), found in Lactobacillus acidophilus (strain ATCC 700396 / NCK56 / N2 / NCFM).